The chain runs to 1691 residues: Protein TIC 214 (1691 aa).

6 consecutive transmembrane segments (helical) span residues 19–39, 60–80, 84–104, 123–143, 158–178, and 200–220; these read MLLGFYYGLLTTLPVGPSQIL, VLAQLITASSIYCSPIYLLLL, LLTIVAIPYTLLFCLVIKDFP, LFLISFFFQILNPIMLPNSVL, TVFMVSTFMGWLTGQAAFNFF, and FIYATFSIVSISYAVAYLGRA. Positions 819 to 839 are disordered; the sequence is EKQHTLQRKHKEIGSKSRELK.

It belongs to the TIC214 family. In terms of assembly, part of the Tic complex.

It localises to the plastid. It is found in the chloroplast inner membrane. Functionally, involved in protein precursor import into chloroplasts. May be part of an intermediate translocation complex acting as a protein-conducting channel at the inner envelope. The polypeptide is Protein TIC 214 (Adiantum capillus-veneris (Maidenhair fern)).